The sequence spans 406 residues: 3-isopropylmalate dehydrogenase, chloroplastic (406 aa).

The transit peptide at 1 to 34 directs the protein to the chloroplast; the sequence is MAAALQTNIRPVKFPATLRALTKQSSPAPFRVRC. S71 carries the post-translational modification Phosphoserine. 117 to 130 contacts NAD(+); that stretch reads GYKWDKNEKHLKPE. Residues R137, R147, R175, and D265 each contribute to the substrate site. Residues D265, D289, and D293 each contribute to the Mg(2+) site. 323-335 is a binding site for NAD(+); that stretch reads GSAPDIAGQDKAN.

It belongs to the isocitrate and isopropylmalate dehydrogenases family. As to quaternary structure, homodimer. Mg(2+) serves as cofactor. Requires Mn(2+) as cofactor.

Its subcellular location is the plastid. The protein localises to the chloroplast. The enzyme catalyses (2R,3S)-3-isopropylmalate + NAD(+) = 4-methyl-2-oxopentanoate + CO2 + NADH. It participates in amino-acid biosynthesis; L-leucine biosynthesis; L-leucine from 3-methyl-2-oxobutanoate: step 3/4. Its function is as follows. Catalyzes the oxidation of 3-carboxy-2-hydroxy-4-methylpentanoate (3-isopropylmalate) to 3-carboxy-4-methyl-2-oxopentanoate. The product decarboxylates to 4-methyl-2 oxopentanoate. This Brassica napus (Rape) protein is 3-isopropylmalate dehydrogenase, chloroplastic.